The primary structure comprises 378 residues: Probable endopolygalacturonase AFUB_016610 (378 aa).

An N-terminal signal peptide occupies residues 1 to 19 (MLKLMGSLVLLASAAEVIA). Positions 20-35 (SPAAEPVAPSTTLEKR) are excised as a propeptide. A disulfide bond links Cys38 and Cys56. 3 PbH1 repeats span residues 147 to 169 (TSSSSITDLHILNTPVQAVSING), 170 to 200 (CDGLTITDITIDNSAGDTQGGHNTDAFDIGS), and 201 to 222 (SSNIIISGAKVYNQDDCVAVNS). Catalysis depends on Asp215, which acts as the Proton donor. Residues Cys217 and Cys233 are joined by a disulfide bond. His237 is a catalytic residue. PbH1 repeat units follow at residues 252–273 (VENVSFTNSQVTNSDNGLRIKA) and 281–303 (IKGVTYSGITLSSIRKYGILIEQ). The N-linked (GlcNAc...) asparagine glycan is linked to Asn254. Asn327 carries N-linked (GlcNAc...) asparagine glycosylation. Cysteines 345 and 350 form a disulfide. Residue Asn352 is glycosylated (N-linked (GlcNAc...) asparagine). Cys369 and Cys378 are joined by a disulfide.

The protein belongs to the glycosyl hydrolase 28 family.

The protein resides in the secreted. It catalyses the reaction (1,4-alpha-D-galacturonosyl)n+m + H2O = (1,4-alpha-D-galacturonosyl)n + (1,4-alpha-D-galacturonosyl)m.. Its function is as follows. Involved in maceration and soft-rotting of plant tissue. Hydrolyzes the 1,4-alpha glycosidic bonds of de-esterified pectate in the smooth region of the plant cell wall. In Aspergillus fumigatus (strain CBS 144.89 / FGSC A1163 / CEA10) (Neosartorya fumigata), this protein is Probable endopolygalacturonase AFUB_016610.